A 226-amino-acid polypeptide reads, in one-letter code: UPF0502 protein Daci_5373 (226 aa).

The protein belongs to the UPF0502 family.

This Delftia acidovorans (strain DSM 14801 / SPH-1) protein is UPF0502 protein Daci_5373.